The chain runs to 258 residues: Regulatory protein RecX (258 aa).

It belongs to the RecX family.

It is found in the cytoplasm. In terms of biological role, modulates RecA activity. The chain is Regulatory protein RecX from Streptococcus pyogenes serotype M2 (strain MGAS10270).